The sequence spans 324 residues: Probable UDP-sugar transporter protein SLC35A4 (324 aa).

The Cytoplasmic segment spans residues 1–18 (MSVEDGGMPGLARPKQAR). A helical membrane pass occupies residues 19–39 (WTLMLFLSTAMYGAHAPFLAL). The Lumenal portion of the chain corresponds to 40 to 52 (CHVDGRVPFRPSS). Residues 53–73 (AVLLTELTKLLLCAFSLLVGW) traverse the membrane as a helical segment. Over 74–85 (QTWPQGTPPWRQ) the chain is Cytoplasmic. The helical transmembrane segment at 86-106 (AAPFALSALLYGANNNLVIYL) threads the bilayer. The Lumenal portion of the chain corresponds to 107-142 (QRYMDPSTYQVLSNLKIGSTALLYCLCLGHRLSARQ). A helical membrane pass occupies residues 143–163 (GLALLLLMAAGACYASGGFQE). Residues 164-180 (PGNTLPGPRSAAGARPM) lie on the Cytoplasmic side of the membrane. A helical transmembrane segment spans residues 181 to 201 (PLHITPLGLLLLILYCLISGL). Residues 202 to 214 (SSVYTELIMKRQR) are Lumenal-facing. A helical membrane pass occupies residues 215-235 (LPLALQNLFLYTFGVILNLGL). The Cytoplasmic segment spans residues 236 to 248 (YAGSGPGPGFLEG). The helical transmembrane segment at 249–271 (FSGWAVLVVLNQAVNGLLMSAVM) threads the bilayer. Topologically, residues 272-279 (KHGSSITR) are lumenal. A helical transmembrane segment spans residues 280–300 (LFIVSCSLVVNAVLSAVLLQL). At 301–324 (QLTATFFLAALLIGLAVCLYYGSP) the chain is on the cytoplasmic side.

The protein belongs to the nucleotide-sugar transporter family. SLC35A subfamily. Found in a complex with SLC35A2 and SLC35A3. Expressed in the kidney, lung, testis, and prostate. Expressed in the brain by sets of neurons, such as the pyramidal cells of the cortex, the Purkinje cells of the cerebellum, and the motoneurons of the brainstem.

The protein localises to the golgi apparatus membrane. It carries out the reaction CDP-L-ribitol(in) + CDP(out) = CDP-L-ribitol(out) + CDP(in). Its function is as follows. Mediates the transport of CDP-ribitol. Does not exhibit CMP-sialic acid, UDP-galactose and UDP-N-acetylglucosamine transport activity. The protein is Probable UDP-sugar transporter protein SLC35A4 of Rattus norvegicus (Rat).